A 459-amino-acid chain; its full sequence is Argininosuccinate lyase (459 aa).

The protein belongs to the lyase 1 family. Argininosuccinate lyase subfamily.

It is found in the cytoplasm. It catalyses the reaction 2-(N(omega)-L-arginino)succinate = fumarate + L-arginine. It participates in amino-acid biosynthesis; L-arginine biosynthesis; L-arginine from L-ornithine and carbamoyl phosphate: step 3/3. The chain is Argininosuccinate lyase from Ruminiclostridium cellulolyticum (strain ATCC 35319 / DSM 5812 / JCM 6584 / H10) (Clostridium cellulolyticum).